Reading from the N-terminus, the 755-residue chain is Histone-lysine N-methyltransferase, H3 lysine-9 specific SUVH8 (755 aa).

2 disordered regions span residues 62-98 (YDRD…PPQT) and 111-243 (YDRD…KMVI). 2 stretches are compositionally biased toward basic and acidic residues: residues 73-86 (VHRE…EEAH) and 122-135 (IDRE…EDAH). A DNA-binding region (a.T hook) is located at residues 174–186 (KRGRGRPKGSKNG). Residues 174 to 193 (KRGRGRPKGSKNGSRKPKKP) show a composition bias toward basic residues. The span at 197–207 (DNNSTDASAGP) shows a compositional bias: polar residues. A compositionally biased stretch (basic residues) spans 212–231 (GKRRCGRPKGLKNRSRKPKK). The 139-residue stretch at 310-448 (GPIPGVQVGD…FKEYRFKLLR (139 aa)) folds into the YDG domain. The 51-residue stretch at 528-578 (QSLVQSYIHQNCTCILKNCGQLPYHDNILVCRKPLIYECGGSCPTRMVETG) folds into the Pre-SET domain. In terms of domain architecture, SET spans 581–723 (LHLEVFKTSN…PMTELTYDYG (143 aa)). S-adenosyl-L-methionine-binding positions include 591–593 (CGW), D624, Y626, R676, and 679–680 (NH). Zn(2+) is bound by residues C682, C743, C745, and C750. The region spanning 739-755 (GKKICLCGSVKCRGSFG) is the Post-SET domain.

This sequence belongs to the class V-like SAM-binding methyltransferase superfamily. Histone-lysine methyltransferase family. Suvar3-9 subfamily.

It localises to the nucleus. The protein localises to the chromosome. It is found in the centromere. The enzyme catalyses N(6)-methyl-L-lysyl(9)-[histone H3] + S-adenosyl-L-methionine = N(6),N(6)-dimethyl-L-lysyl(9)-[histone H3] + S-adenosyl-L-homocysteine + H(+). The catalysed reaction is L-lysyl(9)-[histone H3] + S-adenosyl-L-methionine = N(6)-methyl-L-lysyl(9)-[histone H3] + S-adenosyl-L-homocysteine + H(+). Functionally, histone methyltransferase. Methylates 'Lys-9' of histone H3. H3 'Lys-9' methylation represents a specific tag for epigenetic transcriptional repression. In Arabidopsis thaliana (Mouse-ear cress), this protein is Histone-lysine N-methyltransferase, H3 lysine-9 specific SUVH8 (SUVH8).